Reading from the N-terminus, the 528-residue chain is D-3-phosphoglycerate dehydrogenase (528 aa).

Residues 151 to 152 (RI), aspartate 171, 230 to 232 (AAR), and aspartate 256 each bind NAD(+). Residue arginine 232 is part of the active site. The active site involves glutamate 261. Residue histidine 279 is the Proton donor of the active site. Position 279–282 (279–282 (HLGA)) interacts with NAD(+). Residues 455-527 (NLIIHYVDRP…DAYKLEVVDL (73 aa)) enclose the ACT domain.

This sequence belongs to the D-isomer specific 2-hydroxyacid dehydrogenase family.

The catalysed reaction is (2R)-3-phosphoglycerate + NAD(+) = 3-phosphooxypyruvate + NADH + H(+). It catalyses the reaction (R)-2-hydroxyglutarate + NAD(+) = 2-oxoglutarate + NADH + H(+). It participates in amino-acid biosynthesis; L-serine biosynthesis; L-serine from 3-phospho-D-glycerate: step 1/3. In terms of biological role, catalyzes the reversible oxidation of 3-phospho-D-glycerate to 3-phosphonooxypyruvate, the first step of the phosphorylated L-serine biosynthesis pathway. Also catalyzes the reversible oxidation of 2-hydroxyglutarate to 2-oxoglutarate. This is D-3-phosphoglycerate dehydrogenase (serA) from Mycobacterium bovis (strain ATCC BAA-935 / AF2122/97).